Here is a 466-residue protein sequence, read N- to C-terminus: ATP synthase subunit beta (466 aa).

ATP is bound at residue 153-160 (GGAGVGKT).

It belongs to the ATPase alpha/beta chains family. F-type ATPases have 2 components, CF(1) - the catalytic core - and CF(0) - the membrane proton channel. CF(1) has five subunits: alpha(3), beta(3), gamma(1), delta(1), epsilon(1). CF(0) has three main subunits: a(1), b(2) and c(9-12). The alpha and beta chains form an alternating ring which encloses part of the gamma chain. CF(1) is attached to CF(0) by a central stalk formed by the gamma and epsilon chains, while a peripheral stalk is formed by the delta and b chains.

It is found in the cell membrane. It catalyses the reaction ATP + H2O + 4 H(+)(in) = ADP + phosphate + 5 H(+)(out). Functionally, produces ATP from ADP in the presence of a proton gradient across the membrane. The catalytic sites are hosted primarily by the beta subunits. This Leuconostoc citreum (strain KM20) protein is ATP synthase subunit beta.